A 153-amino-acid chain; its full sequence is Ribonuclease H (153 aa).

An RNase H type-1 domain is found at 4–145 (SVDSVELFTD…ADQLANRGVD (142 aa)). Mg(2+) is bound by residues aspartate 13, glutamate 51, aspartate 73, and aspartate 137.

It belongs to the RNase H family. Monomer. It depends on Mg(2+) as a cofactor.

The protein localises to the cytoplasm. The enzyme catalyses Endonucleolytic cleavage to 5'-phosphomonoester.. In terms of biological role, endonuclease that specifically degrades the RNA of RNA-DNA hybrids. This is Ribonuclease H from Pseudomonas fluorescens (strain Pf0-1).